The sequence spans 466 residues: Cysteine--tRNA ligase (466 aa).

Cysteine 29 provides a ligand contact to Zn(2+). The 'HIGH' region motif lies at 31 to 41 (ATVQAAPHIGH). Positions 208, 233, and 237 each coordinate Zn(2+). The 'KMSKS' region signature appears at 264-268 (KMSKS). ATP is bound at residue lysine 267.

It belongs to the class-I aminoacyl-tRNA synthetase family. As to quaternary structure, monomer. Zn(2+) is required as a cofactor.

The protein localises to the cytoplasm. It catalyses the reaction tRNA(Cys) + L-cysteine + ATP = L-cysteinyl-tRNA(Cys) + AMP + diphosphate. The protein is Cysteine--tRNA ligase of Streptomyces griseus subsp. griseus (strain JCM 4626 / CBS 651.72 / NBRC 13350 / KCC S-0626 / ISP 5235).